The sequence spans 1166 residues: Reverse gyrase 2 (1166 aa).

Residues 1-40 form an RG N-terminal-type zinc finger; sequence MINVMYKNSCPNCGGDISGDRLLNGLPCEACLPYINGIDD. The Zn(2+) site is built by cysteine 10, cysteine 13, cysteine 28, and cysteine 31. ATP is bound by residues glutamine 92 and 109 to 116; that span reads APTGLGKT. Residues 96–285 form the Helicase ATP-binding domain; it reads LRRLASNQSF…ALRLLTGFEP (190 aa). The short motif at 190–193 is the DEAD box element; sequence DDAD. The topoisomerase I stretch occupies residues 576-1166; that stretch reads FNISTGLLIV…VNPLKSEQNV (591 aa). One can recognise a Toprim domain in the interval 580–743; it reads TGLLIVESPT…NVYRVVYHEI (164 aa). Glutamate 586 contacts Mg(2+). The RG C-terminal-type zinc-finger motif lies at 662 to 689; the sequence is IKKCLDCNKIFSSASDKCPYCGSANLQS. Residues cysteine 665, cysteine 668, cysteine 679, and cysteine 682 each coordinate Zn(2+). Aspartate 712 provides a ligand contact to Mg(2+). One can recognise a Topo IA-type catalytic domain in the interval 759 to 1157; it reads NTNLVMSQIV…EIFSEISTLV (399 aa). The active-site O-(5'-phospho-DNA)-tyrosine intermediate is tyrosine 903.

This sequence in the N-terminal section; belongs to the DEAD box helicase family. DDVD subfamily. The protein in the C-terminal section; belongs to the type IA topoisomerase family. Monomer. Requires Zn(2+) as cofactor. It depends on Mg(2+) as a cofactor.

The protein resides in the cytoplasm. The catalysed reaction is ATP + H2O = ADP + phosphate + H(+). Its activity is regulated as follows. At least one of the 2 proteins is inhibited by actinomycin D. Less sensitive to NaCl than TopR1, maximal positive supercoiling is observed with 100 mM NaCl; as NaCl rises higher than 400 mM supercoiling decreases. At 600 mM NaCl relaxes but does not introduce positive supercoils into negatively supercoiled substrate. Functionally, modifies the topological state of DNA by introducing positive supercoils in an ATP-dependent process. A highly processive enzyme, it introduces a large number of positive supercoils directly in a negatively supercoiled substrate. At 75 degrees Celsius introduces more than 23 positive supercoils into pTZ18R DNA (probably 2860 bp), more than TopR1; unlike TopR1 little to no relaxation of the negatively supercoiled substrate is seen in the presence of ATP, in the absence of ATP no activity is seen. At 45 degrees Celsius the enzyme is slower and in vitro individual steps can be detected. It cleaves transiently a single DNA strand and remains covalently bound to the 5' DNA end through a tyrosine residue. May be involved in DNA damage response. May be involved in rewinding the DNA strands in the regions of the chromosome that have opened up to allow transcription or replication. In terms of biological role, there are 2 genes for this protein in the cell. During exponential growth this is the more highly expressed isoform (about 125 molecules per cell at 80 degrees Celsius, about 117 molecules at 88 degrees Celsius); this isoform is less active at higher temperature. Grows actively at both 80 and 88 degrees Celsius; survives a long exposure at 45 degrees Celsius without DNA replication or cell division occurring. Experiments using whole cell extracts do not distinguish which isoform is present, the results are probably a mixture of the two forms. The polypeptide is Reverse gyrase 2 (Saccharolobus solfataricus (strain ATCC 35092 / DSM 1617 / JCM 11322 / P2) (Sulfolobus solfataricus)).